A 90-amino-acid polypeptide reads, in one-letter code: Small ribosomal subunit protein uS15c (90 aa).

This sequence belongs to the universal ribosomal protein uS15 family. As to quaternary structure, part of the 30S ribosomal subunit.

Its subcellular location is the plastid. The sequence is that of Small ribosomal subunit protein uS15c (rps15) from Cuscuta reflexa (Southern Asian dodder).